The following is a 126-amino-acid chain: Nucleoside diphosphate kinase B (126 aa).

ATP is bound by residues Lys-6, Phe-37, Thr-68, Arg-79, and Asn-89. His-92 (pros-phosphohistidine intermediate) is an active-site residue.

It belongs to the NDK family. It depends on Mg(2+) as a cofactor.

The protein resides in the cytoplasm. Its subcellular location is the nucleus. The protein localises to the cell projection. It is found in the lamellipodium. It localises to the ruffle. It carries out the reaction a 2'-deoxyribonucleoside 5'-diphosphate + ATP = a 2'-deoxyribonucleoside 5'-triphosphate + ADP. It catalyses the reaction a ribonucleoside 5'-diphosphate + ATP = a ribonucleoside 5'-triphosphate + ADP. In terms of biological role, major role in the synthesis of nucleoside triphosphates other than ATP. This Macruronus magellanicus (Patagonian grenadier) protein is Nucleoside diphosphate kinase B (nme2).